The sequence spans 510 residues: NAD(P)H-quinone oxidoreductase subunit 2 B, chloroplastic (510 aa).

Transmembrane regions (helical) follow at residues 26–46 (LFDG…ILLL), 57–77 (IPWF…ALLF), 99–119 (IFQF…VEYI), 124–144 (MAIT…MFLC), 149–169 (LITI…LSGY), 183–203 (YLLM…WLYG), 227–247 (PGIS…LSPA), 295–315 (WHPL…LIAI), 323–342 (MLAY…IIVG), 354–374 (YMLF…LFGL), 395–415 (ALSL…AGFF), 418–438 (LHLF…IGLF), and 484–504 (MIVC…IIAI).

Belongs to the complex I subunit 2 family. NDH is composed of at least 16 different subunits, 5 of which are encoded in the nucleus.

It is found in the plastid. The protein localises to the chloroplast thylakoid membrane. It catalyses the reaction a plastoquinone + NADH + (n+1) H(+)(in) = a plastoquinol + NAD(+) + n H(+)(out). It carries out the reaction a plastoquinone + NADPH + (n+1) H(+)(in) = a plastoquinol + NADP(+) + n H(+)(out). Its function is as follows. NDH shuttles electrons from NAD(P)H:plastoquinone, via FMN and iron-sulfur (Fe-S) centers, to quinones in the photosynthetic chain and possibly in a chloroplast respiratory chain. The immediate electron acceptor for the enzyme in this species is believed to be plastoquinone. Couples the redox reaction to proton translocation, and thus conserves the redox energy in a proton gradient. The polypeptide is NAD(P)H-quinone oxidoreductase subunit 2 B, chloroplastic (Oenothera argillicola (Appalachian evening primrose)).